Consider the following 212-residue polypeptide: Peroxiredoxin 2 (212 aa).

Positions 7-162 (PLIGEKFPEM…ILRSIRALQL (156 aa)) constitute a Thioredoxin domain. C49 (cysteine sulfenic acid (-SOH) intermediate) is an active-site residue. R125 serves as a coordination point for substrate.

The protein belongs to the peroxiredoxin family. Prx6 subfamily. Homodecamer. Pentamer of dimers that assemble into a ring structure.

It is found in the cytoplasm. The enzyme catalyses a hydroperoxide + [thioredoxin]-dithiol = an alcohol + [thioredoxin]-disulfide + H2O. Functionally, thiol-specific peroxidase that catalyzes the reduction of hydrogen peroxide and organic hydroperoxides to water and alcohols, respectively. Plays a role in cell protection against oxidative stress by detoxifying peroxides. This Sulfurisphaera tokodaii (strain DSM 16993 / JCM 10545 / NBRC 100140 / 7) (Sulfolobus tokodaii) protein is Peroxiredoxin 2.